A 76-amino-acid chain; its full sequence is Exodeoxyribonuclease 7 small subunit (76 aa).

It belongs to the XseB family. In terms of assembly, heterooligomer composed of large and small subunits.

It localises to the cytoplasm. The enzyme catalyses Exonucleolytic cleavage in either 5'- to 3'- or 3'- to 5'-direction to yield nucleoside 5'-phosphates.. In terms of biological role, bidirectionally degrades single-stranded DNA into large acid-insoluble oligonucleotides, which are then degraded further into small acid-soluble oligonucleotides. The sequence is that of Exodeoxyribonuclease 7 small subunit from Staphylococcus epidermidis (strain ATCC 35984 / DSM 28319 / BCRC 17069 / CCUG 31568 / BM 3577 / RP62A).